Consider the following 234-residue polypeptide: Leucyl/phenylalanyl-tRNA--protein transferase (234 aa).

The protein belongs to the L/F-transferase family.

The protein resides in the cytoplasm. It carries out the reaction N-terminal L-lysyl-[protein] + L-leucyl-tRNA(Leu) = N-terminal L-leucyl-L-lysyl-[protein] + tRNA(Leu) + H(+). It catalyses the reaction N-terminal L-arginyl-[protein] + L-leucyl-tRNA(Leu) = N-terminal L-leucyl-L-arginyl-[protein] + tRNA(Leu) + H(+). The enzyme catalyses L-phenylalanyl-tRNA(Phe) + an N-terminal L-alpha-aminoacyl-[protein] = an N-terminal L-phenylalanyl-L-alpha-aminoacyl-[protein] + tRNA(Phe). Functionally, functions in the N-end rule pathway of protein degradation where it conjugates Leu, Phe and, less efficiently, Met from aminoacyl-tRNAs to the N-termini of proteins containing an N-terminal arginine or lysine. This chain is Leucyl/phenylalanyl-tRNA--protein transferase, found in Salmonella agona (strain SL483).